The primary structure comprises 271 residues: tRNA pseudouridine synthase A (271 aa).

The active-site Nucleophile is Asp-52. Tyr-110 is a substrate binding site.

The protein belongs to the tRNA pseudouridine synthase TruA family. Homodimer.

It carries out the reaction uridine(38/39/40) in tRNA = pseudouridine(38/39/40) in tRNA. Functionally, formation of pseudouridine at positions 38, 39 and 40 in the anticodon stem and loop of transfer RNAs. In Maridesulfovibrio salexigens (strain ATCC 14822 / DSM 2638 / NCIMB 8403 / VKM B-1763) (Desulfovibrio salexigens), this protein is tRNA pseudouridine synthase A.